The sequence spans 273 residues: 4-hydroxy-tetrahydrodipicolinate reductase (273 aa).

Residues 12–17 and Glu-38 each bind NAD(+); that span reads GAGGRM. NADP(+) is bound at residue Arg-39. NAD(+) contacts are provided by residues 102–104 and 126–129; these read GTT and AANF. Residue His-159 is the Proton donor/acceptor of the active site. His-160 contributes to the (S)-2,3,4,5-tetrahydrodipicolinate binding site. Lys-163 functions as the Proton donor in the catalytic mechanism. 169–170 provides a ligand contact to (S)-2,3,4,5-tetrahydrodipicolinate; the sequence is GT.

The protein belongs to the DapB family. In terms of assembly, homotetramer.

Its subcellular location is the cytoplasm. The catalysed reaction is (S)-2,3,4,5-tetrahydrodipicolinate + NAD(+) + H2O = (2S,4S)-4-hydroxy-2,3,4,5-tetrahydrodipicolinate + NADH + H(+). It carries out the reaction (S)-2,3,4,5-tetrahydrodipicolinate + NADP(+) + H2O = (2S,4S)-4-hydroxy-2,3,4,5-tetrahydrodipicolinate + NADPH + H(+). It functions in the pathway amino-acid biosynthesis; L-lysine biosynthesis via DAP pathway; (S)-tetrahydrodipicolinate from L-aspartate: step 4/4. Catalyzes the conversion of 4-hydroxy-tetrahydrodipicolinate (HTPA) to tetrahydrodipicolinate. The polypeptide is 4-hydroxy-tetrahydrodipicolinate reductase (Salmonella gallinarum (strain 287/91 / NCTC 13346)).